The sequence spans 138 residues: MLSPKKVKYRKKQRGRLSGEAQKGNKISFGEYGLVSLETNFITARQIEAARIAMTRKIKRGGRVWIRIFPDIPYTKKPAETRMGKGKGGVDHWNAPVKLGTVMFEMAGVVEELAQEAMSLASSKLPVKTMFVVRRDLR.

Residues 1-15 (MLSPKKVKYRKKQRG) are compositionally biased toward basic residues. The segment at 1–21 (MLSPKKVKYRKKQRGRLSGEA) is disordered.

The protein belongs to the universal ribosomal protein uL16 family. As to quaternary structure, part of the 50S ribosomal subunit.

In terms of biological role, binds 23S rRNA and is also seen to make contacts with the A and possibly P site tRNAs. This Borreliella afzelii (strain PKo) (Borrelia afzelii) protein is Large ribosomal subunit protein uL16.